The sequence spans 220 residues: Iron-sulfur cluster repair protein YtfE (220 aa).

This sequence belongs to the RIC family. YtfE subfamily. As to quaternary structure, homodimer.

The protein resides in the cytoplasm. Its function is as follows. Di-iron-containing protein involved in the repair of iron-sulfur clusters damaged by oxidative and nitrosative stress conditions. This chain is Iron-sulfur cluster repair protein YtfE, found in Escherichia coli O81 (strain ED1a).